The following is an 883-amino-acid chain: Glutamate receptor 2 (883 aa).

An N-terminal signal peptide occupies residues 1 to 24 (MQKIMHISVLLSPVLWGLIFGVSS). Residues 25–543 (NSIQIGGLFP…GVFSFLDPLA (519 aa)) are Extracellular-facing. A disulfide bridge links C78 with C330. N256, N370, N406, and N413 each carry an N-linked (GlcNAc...) asparagine glycan. L-glutamate is bound by residues P499, T501, and R506. The helical transmembrane segment at 544-564 (YEIWMCIVFAYIGVSVVLFLV) threads the bilayer. The Cytoplasmic segment spans residues 565 to 591 (SRFSPYEWHTEEFEDGRETQSSESTNE). The helical; Pore-forming intramembrane region spans 592–607 (FGIFNSLWFSLGAFMQ). Residues 608–610 (QGC) lie within the membrane without spanning it. C610 carries S-palmitoyl cysteine lipidation. The Cytoplasmic portion of the chain corresponds to 611–616 (DISPRS). The chain crosses the membrane as a helical span at residues 617–637 (LSGRIVGGVWWFFTLIIISSY). Over 638–812 (TANLAAFLTV…EKTSALSLSN (175 aa)) the chain is Extracellular. 2 residues coordinate L-glutamate: S675 and T676. Residue S683 is modified to Phosphoserine; by PKC. S717 carries the post-translational modification Phosphoserine; by PKG. E726 is an L-glutamate binding site. An intrachain disulfide couples C739 to C794. A helical membrane pass occupies residues 813-833 (VAGVFYILVGGLGLAMLVALI). Topologically, residues 834 to 883 (EFCYKSRAEAKRMKVAKNAQNINPSSSQNSQNFATYKEGYNVYGIESVKI) are cytoplasmic. C836 is lipidated: S-palmitoyl cysteine. Phosphoserine occurs at positions 860 and 863. Residues 867–877 (ATYKEGYNVYG) form a required for interaction with IQSEC1 region. Y876 carries the post-translational modification Phosphotyrosine. At S880 the chain carries Phosphoserine.

This sequence belongs to the glutamate-gated ion channel (TC 1.A.10.1) family. GRIA2 subfamily. In terms of assembly, homotetramer or heterotetramer of pore-forming glutamate receptor subunits. Tetramers may be formed by the dimerization of dimers. May interact with MPP4. Forms a ternary complex with GRIP1 and CSPG4. Interacts with ATAD1 in an ATP-dependent manner. ATAD1-catalyzed ATP hydrolysis disrupts binding to ATAD1 and to GRIP1 and leads to AMPAR complex disassembly. Interacts with GRIP1 and GRIP2. Interacts with NSF via its C-terminus. Isoform 1, but not isoform 3, interacts with PICK1. Interacts with CACNG2. Interacts with GRIA1 and SYNDIG1. Part of a complex containing GRIA2, NSF and NAPA and/or NAPB. Interacts with SNX27 (via PDZ domain); the interaction is required for recycling to the plasma membrane when endocytosed and prevent degradation in lysosomes. Interacts with LRFN1. Found in a complex with GRIA1, GRIA3, GRIA4, CNIH2, CNIH3, CACNG2, CACNG3, CACNG4, CACNG5, CACNG7 and CACNG8. Interacts with CACNG5. Interacts with OLFM2. Interacts with AP4B1, AP4E1 and AP4M1; probably indirect it mediates the somatodendritic localization of GRIA2 in neurons. Forms a complex with GRIP1, NSG1 and STX12; controls the intracellular fate of AMPAR and the endosomal sorting of the GRIA2 subunit toward recycling and membrane targeting. Interacts with IQSEC1; the interaction is required for ARF6 activation. Interacts (heterotetramer form) with CNIH2 and CNIH3; this interaction promotes expression at the plasma membrane and extensively modulates their gating properties by slowing deactivation and desensitization kinetics. Palmitoylated. Depalmitoylated upon L-glutamate stimulation. ZDHHC3/GODZ specifically palmitoylates Cys-610, which leads to Golgi retention and decreased cell surface expression. In contrast, Cys-836 palmitoylation does not affect cell surface expression but regulates stimulation-dependent endocytosis. Post-translationally, N-glycosylated. In terms of processing, ubiquitinated by RNF167, leading to its degradation. Phosphorylation at Tyr-876 is required for interaction with IQSEC1 and ARF6 activation, which in turn triggers AMPAR internalization for persistent synaptic depression. In terms of tissue distribution, detected in brain cortex, hippocampus and cerebellum (at protein level). Detected in hippocampus.

It localises to the cell membrane. Its subcellular location is the postsynaptic cell membrane. The protein localises to the postsynaptic density membrane. It carries out the reaction Ca(2+)(in) = Ca(2+)(out). The catalysed reaction is Na(+)(in) = Na(+)(out). Functionally, ionotropic glutamate receptor that functions as a ligand-gated cation channel, gated by L-glutamate and glutamatergic agonists such as alpha-amino-3-hydroxy-5-methyl-4-isoxazolepropionic acid (AMPA), quisqualic acid, and kainic acid. L-glutamate acts as an excitatory neurotransmitter at many synapses in the central nervous system and plays an important role in fast excitatory synaptic transmission. Binding of the excitatory neurotransmitter L-glutamate induces a conformation change, leading to the opening of the cation channel, and thereby converts the chemical signal to an electrical impulse upon entry of monovalent and divalent cations such as sodium and calcium. The receptor then desensitizes rapidly and enters in a transient inactive state, characterized by the presence of bound agonist. In the presence of CACNG4 or CACNG7 or CACNG8, shows resensitization which is characterized by a delayed accumulation of current flux upon continued application of L-glutamate. Through complex formation with NSG1, GRIP1 and STX12 controls the intracellular fate of AMPAR and the endosomal sorting of the GRIA2 subunit toward recycling and membrane targeting. In Mus musculus (Mouse), this protein is Glutamate receptor 2.